We begin with the raw amino-acid sequence, 214 residues long: Ribonuclease HII (214 aa).

One can recognise an RNase H type-2 domain in the interval 26–214 (EIVCGVDEAG…PVRAALDLIR (189 aa)). Residues Asp32, Glu33, and Asp124 each coordinate a divalent metal cation.

It belongs to the RNase HII family. Mn(2+) serves as cofactor. Mg(2+) is required as a cofactor.

It is found in the cytoplasm. It carries out the reaction Endonucleolytic cleavage to 5'-phosphomonoester.. Endonuclease that specifically degrades the RNA of RNA-DNA hybrids. This is Ribonuclease HII from Burkholderia orbicola (strain MC0-3).